Reading from the N-terminus, the 299-residue chain is Putative peptidyl-prolyl cis-trans isomerase jhp_0161 (299 aa).

The first 21 residues, 1-21 (MKKNILNLALVGALSASFLMA), serve as a signal peptide directing secretion. The 100-residue stretch at 154-253 (KQEAHARHIL…FGYHIIYLIS (100 aa)) folds into the PpiC domain.

It carries out the reaction [protein]-peptidylproline (omega=180) = [protein]-peptidylproline (omega=0). In Helicobacter pylori (strain J99 / ATCC 700824) (Campylobacter pylori J99), this protein is Putative peptidyl-prolyl cis-trans isomerase jhp_0161.